A 448-amino-acid chain; its full sequence is Homogentisate 1,2-dioxygenase (448 aa).

H303 serves as the catalytic Proton acceptor. Positions 346 and 352 each coordinate Fe cation. Positions 361 and 382 each coordinate homogentisate. Position 382 (H382) interacts with Fe cation.

Belongs to the homogentisate dioxygenase family. As to quaternary structure, hexamer; dimer of trimers. The cofactor is Fe cation.

The catalysed reaction is homogentisate + O2 = 4-maleylacetoacetate + H(+). It participates in amino-acid degradation; L-phenylalanine degradation; acetoacetate and fumarate from L-phenylalanine: step 4/6. Involved in the catabolism of homogentisate (2,5-dihydroxyphenylacetate or 2,5-OH-PhAc), a central intermediate in the degradation of phenylalanine and tyrosine. Catalyzes the oxidative ring cleavage of the aromatic ring of homogentisate to yield maleylacetoacetate. The protein is Homogentisate 1,2-dioxygenase of Rhodopseudomonas palustris (strain BisA53).